The sequence spans 572 residues: Nucleolin 1 (572 aa).

Disordered regions lie at residues Met1–Thr312 and Asp488–Glu572. Over residues Lys7–Lys21 the composition is skewed to low complexity. Residues Lys27–Val38 are compositionally biased toward basic and acidic residues. Low complexity-rich tracts occupy residues Ala45–Lys58 and Lys72–Ser81. 7 stretches are compositionally biased toward acidic residues: residues Ser82–Glu91, Ser109–Asp122, Ser144–Glu156, Asp177–Asp191, Ser208–Asp222, Ser235–Asp247, and Glu261–Glu276. Residues Pro300–Ala311 show a composition bias toward polar residues. 2 RRM domains span residues Ala311–Glu387 and Gln411–Pro492. 2 stretches are compositionally biased toward basic and acidic residues: residues Asp488 to Gly520 and Gly528 to Arg545. Residues Gln553–Lys566 show a composition bias toward polar residues.

The protein resides in the nucleus. It localises to the nucleolus. In terms of biological role, involved in pre-rRNA processing and ribosome assembly. The chain is Nucleolin 1 from Oryza sativa subsp. japonica (Rice).